A 906-amino-acid polypeptide reads, in one-letter code: Cadherin-2A (906 aa).

An N-terminal signal peptide occupies residues 1–28 (MCRKEPFLLPTALCILAALVLHQGPVEA). Residues 29–160 (LGGSRLCKTG…KHNGLQRQKR (132 aa)) constitute a propeptide that is removed on maturation. Cadherin domains are found at residues 161-268 (DWVI…RPEF), 269-383 (LHQI…PPEF), 384-498 (TAMT…NPYF), 499-604 (TPNP…DNAP), and 605-714 (YVYP…TTAP). Residues 161 to 724 (DWVIPPINVP…IIGTGLGTGA (564 aa)) are Extracellular-facing. Ca(2+) is bound by residues glutamate 171, aspartate 227, glutamate 229, aspartate 260, methionine 261, asparagine 262, aspartate 263, and asparagine 264. The N-linked (GlcNAc...) asparagine glycan is linked to asparagine 274. Ca(2+) is bound by residues aspartate 294, aspartate 296, and asparagine 302. The N-linked (GlcNAc...) asparagine glycan is linked to asparagine 326. Ca(2+) is bound at residue aspartate 354. Residues asparagine 403, asparagine 573, asparagine 623, asparagine 652, and asparagine 693 are each glycosylated (N-linked (GlcNAc...) asparagine). Residues 725 to 746 (IIAILLCIIILLTLVLMFVVWM) form a helical membrane-spanning segment. Residues 747–906 (KRRDKERQAK…LADMYGGSDD (160 aa)) lie on the Cytoplasmic side of the membrane. Disordered regions lie at residues 775 to 800 (EEGG…EPDT) and 863 to 884 (SGST…EQDY). Residues 776 to 785 (EGGGEEDQDY) show a composition bias toward acidic residues. Residues 863-880 (SGSTAGSLSSLNSSSSGG) are compositionally biased toward low complexity.

Homodimer (via extracellular region). Can also form heterodimers with other cadherins (via extracellular region). Dimerization occurs in trans, i.e. with a cadherin chain from another cell.

It is found in the cell membrane. The protein resides in the sarcolemma. The protein localises to the cell junction. Its subcellular location is the cell surface. It localises to the desmosome. It is found in the adherens junction. Its function is as follows. Calcium-dependent cell adhesion protein; preferentially mediates homotypic cell-cell adhesion. Cadherins may thus contribute to the sorting of heterogeneous cell types, and thereby play an important role during embryonic development. Required for proper neurite branching. Required for pre- and postsynaptic organization. The polypeptide is Cadherin-2A (cdh2-a) (Xenopus laevis (African clawed frog)).